Here is a 258-residue protein sequence, read N- to C-terminus: Zinc import ATP-binding protein ZnuC (258 aa).

In terms of domain architecture, ABC transporter spans 7-233 (ITAKNINHAY…PAFQELFGQG (227 aa)). Residue 39–46 (GPNGAGKS) participates in ATP binding.

Belongs to the ABC transporter superfamily. Zinc importer (TC 3.A.1.15.5) family. In terms of assembly, the complex is composed of two ATP-binding proteins (ZnuC), two transmembrane proteins (ZnuB) and a solute-binding protein (ZnuA).

The protein resides in the cell inner membrane. It carries out the reaction Zn(2+)(out) + ATP(in) + H2O(in) = Zn(2+)(in) + ADP(in) + phosphate(in) + H(+)(in). Part of the ABC transporter complex ZnuABC involved in zinc import. Responsible for energy coupling to the transport system. In Hydrogenovibrio crunogenus (strain DSM 25203 / XCL-2) (Thiomicrospira crunogena), this protein is Zinc import ATP-binding protein ZnuC.